A 156-amino-acid chain; its full sequence is Small ribosomal subunit protein uS7 (156 aa).

It belongs to the universal ribosomal protein uS7 family. In terms of assembly, part of the 30S ribosomal subunit. Contacts proteins S9 and S11.

Its function is as follows. One of the primary rRNA binding proteins, it binds directly to 16S rRNA where it nucleates assembly of the head domain of the 30S subunit. Is located at the subunit interface close to the decoding center, probably blocks exit of the E-site tRNA. The polypeptide is Small ribosomal subunit protein uS7 (Methylocella silvestris (strain DSM 15510 / CIP 108128 / LMG 27833 / NCIMB 13906 / BL2)).